Reading from the N-terminus, the 573-residue chain is MLO-like protein 11 (573 aa).

Over 1 to 19 the chain is Extracellular; the sequence is MGEGEENGNEADSNERSLA. Residues 20 to 40 form a helical membrane-spanning segment; it reads LSPTWSVAIVLTVFVVVSLIV. At 41–69 the chain is on the cytoplasmic side; sequence ERSIYRLSTWLRKTKRKPMFAALEKMKEE. Residues 70 to 90 form a helical membrane-spanning segment; that stretch reads LMLLGFISLLLTATSSTIANI. At 91–163 the chain is on the extracellular side; it reads CVPSSFYNDR…SYEGLEQLHR (73 aa). The chain crosses the membrane as a helical span at residues 164-184; that stretch reads FIFIMAVTHVTYSCLTMLLAI. Residues 185–287 lie on the Cytoplasmic side of the membrane; sequence VKIHSWRIWE…IRSMEEEFQR (103 aa). A run of 2 helical transmembrane segments spans residues 288–308 and 309–329; these read IVGV…FNIK and GSNL…LVGA. Topologically, residues 330-371 are cytoplasmic; the sequence is KLQHVIATLALENAGLTEYPSGVKLRPRDELFWFNKPELLLS. Residues 372 to 392 form a helical membrane-spanning segment; it reads LIHFILFQNSFELASFFWFWW. The Extracellular segment spans residues 393–411; sequence QFGYSSCFLKNHYLVYFRL. Residues 412–432 form a helical membrane-spanning segment; that stretch reads LLGFAGQFLCSYSTLPLYALV. At 433-573 the chain is on the cytoplasmic side; sequence TQMGTNYKAA…SSSLPSEKRV (141 aa). A calmodulin-binding region spans residues 446–467; that stretch reads QRIRETIRGWGKATRRKRRHGL. 2 disordered regions span residues 500 to 532 and 554 to 573; these read EQQR…TSSR and RSEP…EKRV. A compositionally biased stretch (low complexity) spans 507–516; sequence EQGTTELELQ. A compositionally biased stretch (polar residues) spans 561–573; sequence LSRSSSLPSEKRV.

It belongs to the MLO family.

The protein resides in the membrane. Functionally, may be involved in modulation of pathogen defense and leaf cell death. Activity seems to be regulated by Ca(2+)-dependent calmodulin binding and seems not to require heterotrimeric G proteins. This chain is MLO-like protein 11 (MLO11), found in Arabidopsis thaliana (Mouse-ear cress).